Here is a 577-residue protein sequence, read N- to C-terminus: Proline--tRNA ligase (577 aa).

This sequence belongs to the class-II aminoacyl-tRNA synthetase family. ProS type 1 subfamily. Homodimer.

Its subcellular location is the cytoplasm. It catalyses the reaction tRNA(Pro) + L-proline + ATP = L-prolyl-tRNA(Pro) + AMP + diphosphate. In terms of biological role, catalyzes the attachment of proline to tRNA(Pro) in a two-step reaction: proline is first activated by ATP to form Pro-AMP and then transferred to the acceptor end of tRNA(Pro). As ProRS can inadvertently accommodate and process non-cognate amino acids such as alanine and cysteine, to avoid such errors it has two additional distinct editing activities against alanine. One activity is designated as 'pretransfer' editing and involves the tRNA(Pro)-independent hydrolysis of activated Ala-AMP. The other activity is designated 'posttransfer' editing and involves deacylation of mischarged Ala-tRNA(Pro). The misacylated Cys-tRNA(Pro) is not edited by ProRS. The polypeptide is Proline--tRNA ligase (Chlamydia caviae (strain ATCC VR-813 / DSM 19441 / 03DC25 / GPIC) (Chlamydophila caviae)).